The chain runs to 473 residues: Photosystem II CP43 reaction center protein (473 aa).

The propeptide occupies 1–14 (MKTLYSLRRFSHVE). An N-acetylthreonine modification is found at Thr15. A Phosphothreonine modification is found at Thr15. Transmembrane regions (helical) follow at residues 69 to 93 (LFEV…PHLA), 134 to 155 (LLGP…KDRN), 178 to 200 (KALY…RKIT), 255 to 275 (KPFA…LSYS), and 291 to 312 (WFNN…ASQA). [CaMn4O5] cluster is bound at residue Glu367. A helical transmembrane segment spans residues 447–471 (RARAAAAGFEKGIDRDFEPVLSMTP).

It belongs to the PsbB/PsbC family. PsbC subfamily. PSII is composed of 1 copy each of membrane proteins PsbA, PsbB, PsbC, PsbD, PsbE, PsbF, PsbH, PsbI, PsbJ, PsbK, PsbL, PsbM, PsbT, PsbX, PsbY, PsbZ, Psb30/Ycf12, at least 3 peripheral proteins of the oxygen-evolving complex and a large number of cofactors. It forms dimeric complexes. It depends on Binds multiple chlorophylls and provides some of the ligands for the Ca-4Mn-5O cluster of the oxygen-evolving complex. It may also provide a ligand for a Cl- that is required for oxygen evolution. PSII binds additional chlorophylls, carotenoids and specific lipids. as a cofactor.

Its subcellular location is the plastid membrane. One of the components of the core complex of photosystem II (PSII). It binds chlorophyll and helps catalyze the primary light-induced photochemical processes of PSII. PSII is a light-driven water:plastoquinone oxidoreductase, using light energy to abstract electrons from H(2)O, generating O(2) and a proton gradient subsequently used for ATP formation. The polypeptide is Photosystem II CP43 reaction center protein (Cuscuta obtusiflora (Peruvian dodder)).